Here is a 675-residue protein sequence, read N- to C-terminus: Acetyl-coenzyme A synthetase 2 (675 aa).

CoA contacts are provided by residues 206–209 and Thr-325; that span reads RGGK. ATP-binding positions include 401 to 403, 425 to 430, Asp-516, and Arg-531; these read GEP and DTMWQT. Residue Ser-539 participates in CoA binding. An ATP-binding site is contributed by Arg-542. Arg-604 serves as a coordination point for CoA.

It belongs to the ATP-dependent AMP-binding enzyme family.

The enzyme catalyses acetate + ATP + CoA = acetyl-CoA + AMP + diphosphate. The protein is Acetyl-coenzyme A synthetase 2 (ACS2) of Zygosaccharomyces bailii.